A 238-amino-acid polypeptide reads, in one-letter code: 4-hydroxy-tetrahydrodipicolinate reductase (238 aa).

12–17 (GASGRM) provides a ligand contact to NAD(+). Position 40 (Arg-40) interacts with NADP(+). NAD(+)-binding positions include 93 to 95 (GTT) and 117 to 120 (ASNF). His-149 functions as the Proton donor/acceptor in the catalytic mechanism. His-150 provides a ligand contact to (S)-2,3,4,5-tetrahydrodipicolinate. The active-site Proton donor is the Lys-153. Position 159 to 160 (159 to 160 (GT)) interacts with (S)-2,3,4,5-tetrahydrodipicolinate.

The protein belongs to the DapB family.

The protein resides in the cytoplasm. It catalyses the reaction (S)-2,3,4,5-tetrahydrodipicolinate + NAD(+) + H2O = (2S,4S)-4-hydroxy-2,3,4,5-tetrahydrodipicolinate + NADH + H(+). The enzyme catalyses (S)-2,3,4,5-tetrahydrodipicolinate + NADP(+) + H2O = (2S,4S)-4-hydroxy-2,3,4,5-tetrahydrodipicolinate + NADPH + H(+). The protein operates within amino-acid biosynthesis; L-lysine biosynthesis via DAP pathway; (S)-tetrahydrodipicolinate from L-aspartate: step 4/4. Functionally, catalyzes the conversion of 4-hydroxy-tetrahydrodipicolinate (HTPA) to tetrahydrodipicolinate. The polypeptide is 4-hydroxy-tetrahydrodipicolinate reductase (Xanthomonas axonopodis pv. citri (strain 306)).